Reading from the N-terminus, the 409-residue chain is Nucleoprotein (409 aa).

4 disordered regions span residues 1–32 (MASG…SSGN), 46–84 (SPQP…KGRR), 121–194 (ADVK…GSED), and 238–259 (VDQV…DKMN). The RNA-binding stretch occupies residues 29–160 (SSGNASWFQA…GNFRWDFIPL (132 aa)). Residues 31–156 (GNASWFQAIK…GGPDGNFRWD (126 aa)) form the CoV N NTD domain. Residues 70–84 (YWRRQARFKPGKGRR) show a composition bias toward basic residues. Residues 162–179 (RGRSGRSTAASSAASSRP) show a composition bias toward low complexity. Basic and acidic residues-rich tracts occupy residues 180–192 (PSRE…RSGS) and 247–259 (KGKE…DKMN). Residues Ser-190 and Ser-192 each carry the phosphoserine; by host modification. The CoV N CTD domain maps to 215–331 (TKAKADEMAH…QCVDGVGTRP (117 aa)). A dimerization region spans residues 226 to 333 (RYCKRTIPPG…VDGVGTRPKD (108 aa)). An intrachain disulfide couples Cys-320 to Cys-323. A disordered region spans residues 326-409 (GVGTRPKDDE…GDSALGENEL (84 aa)). Residues 341–356 (RSSSRPATRTSSPAPR) are compositionally biased toward low complexity. Positions 358 to 367 (QRLKKEKRPK) are enriched in basic residues. Residues 368–384 (KQDDEVDKALTSDEERN) show a composition bias toward basic and acidic residues. Phosphothreonine; by host is present on Thr-378. Residue Ser-379 is modified to Phosphoserine; by host.

Belongs to the gammacoronavirus nucleocapsid protein family. In terms of assembly, homooligomer. Both monomeric and oligomeric forms interact with RNA. Interacts with protein M. Interacts with NSP3; this interaction serves to tether the genome to the newly translated replicase-transcriptase complex at a very early stage of infection. ADP-ribosylated. The ADP-ribosylation is retained in the virion during infection. In terms of processing, phosphorylated on serine and threonine residues.

Its subcellular location is the virion. It is found in the host endoplasmic reticulum-Golgi intermediate compartment. The protein resides in the host Golgi apparatus. Its function is as follows. Packages the positive strand viral genome RNA into a helical ribonucleocapsid (RNP) and plays a fundamental role during virion assembly through its interactions with the viral genome and membrane protein M. Plays an important role in enhancing the efficiency of subgenomic viral RNA transcription as well as viral replication. The protein is Nucleoprotein of Avian infectious bronchitis virus (strain Gray) (IBV).